The primary structure comprises 556 residues: Dihydroxy-acid dehydratase (556 aa).

Asp-78 contacts Mg(2+). Cys-119 is a binding site for [2Fe-2S] cluster. Asp-120 and Lys-121 together coordinate Mg(2+). The residue at position 121 (Lys-121) is an N6-carboxylysine. Cys-191 contributes to the [2Fe-2S] cluster binding site. Glu-442 contributes to the Mg(2+) binding site. The active-site Proton acceptor is the Ser-468.

Belongs to the IlvD/Edd family. As to quaternary structure, homodimer. The cofactor is [2Fe-2S] cluster. Mg(2+) serves as cofactor.

It catalyses the reaction (2R)-2,3-dihydroxy-3-methylbutanoate = 3-methyl-2-oxobutanoate + H2O. The enzyme catalyses (2R,3R)-2,3-dihydroxy-3-methylpentanoate = (S)-3-methyl-2-oxopentanoate + H2O. Its pathway is amino-acid biosynthesis; L-isoleucine biosynthesis; L-isoleucine from 2-oxobutanoate: step 3/4. It participates in amino-acid biosynthesis; L-valine biosynthesis; L-valine from pyruvate: step 3/4. Functions in the biosynthesis of branched-chain amino acids. Catalyzes the dehydration of (2R,3R)-2,3-dihydroxy-3-methylpentanoate (2,3-dihydroxy-3-methylvalerate) into 2-oxo-3-methylpentanoate (2-oxo-3-methylvalerate) and of (2R)-2,3-dihydroxy-3-methylbutanoate (2,3-dihydroxyisovalerate) into 2-oxo-3-methylbutanoate (2-oxoisovalerate), the penultimate precursor to L-isoleucine and L-valine, respectively. In Caldanaerobacter subterraneus subsp. tengcongensis (strain DSM 15242 / JCM 11007 / NBRC 100824 / MB4) (Thermoanaerobacter tengcongensis), this protein is Dihydroxy-acid dehydratase.